The primary structure comprises 282 residues: Bis(5'-nucleosyl)-tetraphosphatase, symmetrical (282 aa).

It belongs to the Ap4A hydrolase family.

The enzyme catalyses P(1),P(4)-bis(5'-adenosyl) tetraphosphate + H2O = 2 ADP + 2 H(+). Its function is as follows. Hydrolyzes diadenosine 5',5'''-P1,P4-tetraphosphate to yield ADP. The polypeptide is Bis(5'-nucleosyl)-tetraphosphatase, symmetrical (Klebsiella pneumoniae subsp. pneumoniae (strain ATCC 700721 / MGH 78578)).